We begin with the raw amino-acid sequence, 430 residues long: Ribosomal protein uS12 methylthiotransferase RimO (430 aa).

The MTTase N-terminal domain occupies Ile-2–Lys-119. Cys-11, Cys-46, Cys-81, Cys-145, Cys-149, and Cys-152 together coordinate [4Fe-4S] cluster. One can recognise a Radical SAM core domain in the interval Ser-131 to Glu-361. A TRAM domain is found at Ala-364 to Val-430.

The protein belongs to the methylthiotransferase family. RimO subfamily. It depends on [4Fe-4S] cluster as a cofactor.

The protein localises to the cytoplasm. The catalysed reaction is L-aspartate(89)-[ribosomal protein uS12]-hydrogen + (sulfur carrier)-SH + AH2 + 2 S-adenosyl-L-methionine = 3-methylsulfanyl-L-aspartate(89)-[ribosomal protein uS12]-hydrogen + (sulfur carrier)-H + 5'-deoxyadenosine + L-methionine + A + S-adenosyl-L-homocysteine + 2 H(+). In terms of biological role, catalyzes the methylthiolation of an aspartic acid residue of ribosomal protein uS12. The chain is Ribosomal protein uS12 methylthiotransferase RimO from Nitratidesulfovibrio vulgaris (strain DP4) (Desulfovibrio vulgaris).